We begin with the raw amino-acid sequence, 78 residues long: UPF0291 protein ABC2165 (78 aa).

The disordered stretch occupies residues 56–78 (AKGNDVTPQKLKDSKAQKHKRLH).

It belongs to the UPF0291 family.

Its subcellular location is the cytoplasm. This is UPF0291 protein ABC2165 from Shouchella clausii (strain KSM-K16) (Alkalihalobacillus clausii).